The following is a 183-amino-acid chain: Adenine phosphoribosyltransferase (183 aa).

This sequence belongs to the purine/pyrimidine phosphoribosyltransferase family. As to quaternary structure, homodimer.

It localises to the cytoplasm. It catalyses the reaction AMP + diphosphate = 5-phospho-alpha-D-ribose 1-diphosphate + adenine. It participates in purine metabolism; AMP biosynthesis via salvage pathway; AMP from adenine: step 1/1. Catalyzes a salvage reaction resulting in the formation of AMP, that is energically less costly than de novo synthesis. This chain is Adenine phosphoribosyltransferase, found in Sodalis glossinidius (strain morsitans).